The primary structure comprises 282 residues: Extent of cell elongation protein 1 (282 aa).

Residues 1–18 form the signal peptide; that stretch reads MKFSKVASFAFLALSSQA. Residues 68–92 form a helical membrane-spanning segment; it reads ISFAGIVSSIINQLPSIIQIIGNII.

The protein localises to the secreted. It is found in the host cell membrane. Secreted protein cleaved by KEX2 in 8 similar peptides (ECE1-I to ECE1-VIII). Stimulates biofilm formation. In terms of biological role, acts as a cytolytic peptide toxin that directly damages host epithelial membranes, triggers a danger response signaling pathway and activates epithelial immunity. Probably acts similarly to cationic antimicrobial peptide toxins, inducing lesions after binding to target cell membranes and causing an inward current associated with calcium influx. The sequence is that of Extent of cell elongation protein 1 from Candida tropicalis (strain ATCC MYA-3404 / T1) (Yeast).